A 361-amino-acid chain; its full sequence is Ribosomal RNA large subunit methyltransferase M (361 aa).

Residues serine 186, 219 to 222 (CPGG), aspartate 238, aspartate 258, and aspartate 275 each bind S-adenosyl-L-methionine. Lysine 304 functions as the Proton acceptor in the catalytic mechanism.

It belongs to the class I-like SAM-binding methyltransferase superfamily. RNA methyltransferase RlmE family. RlmM subfamily. In terms of assembly, monomer.

The protein localises to the cytoplasm. The enzyme catalyses cytidine(2498) in 23S rRNA + S-adenosyl-L-methionine = 2'-O-methylcytidine(2498) in 23S rRNA + S-adenosyl-L-homocysteine + H(+). In terms of biological role, catalyzes the 2'-O-methylation at nucleotide C2498 in 23S rRNA. The chain is Ribosomal RNA large subunit methyltransferase M from Pseudoalteromonas translucida (strain TAC 125).